The primary structure comprises 172 residues: MGRRKIKMEMVQDMNTRQVTFSKRRTGLFKKASELATLCNAELGIVVFSPGGKPFSYGKPNLDSVAERFMREYDDSDSGDEEKSGNYRPKLKRLSERLDLLNQEVEAEKERGEKSQEKLESAGDERFKESIETLTLDELNEYKDRLQTVHGRIEGQVNHLQASSCLMLLSRK.

In terms of domain architecture, MADS-box spans 1–61 (MGRRKIKMEM…GKPFSYGKPN (61 aa)). The stretch at 86-123 (NYRPKLKRLSERLDLLNQEVEAEKERGEKSQEKLESAG) forms a coiled coil. Residues 106-125 (EAEKERGEKSQEKLESAGDE) form a disordered region.

In terms of tissue distribution, expressed in pollen.

The protein resides in the nucleus. Its function is as follows. Probable transcription factor. The protein is Agamous-like MADS-box protein AGL29 of Arabidopsis thaliana (Mouse-ear cress).